The sequence spans 345 residues: Fibronectin type 3 and ankyrin repeat domains protein 1 (345 aa).

One can recognise a Fibronectin type-III domain in the interval 8–108 (PPSKPHPPVV…LVSVSTTREP (101 aa)). ANK repeat units lie at residues 109–139 (ISSE…KVDV), 143–172 (FGFT…DVNL), 176–205 (SGKD…SWQA), 209–238 (GGCT…EVDV), 243–273 (SGWT…NVNV), and 277–306 (NGKT…DASV).

Interacts with COPS5; regulates the phosphorylation of JUN and the transcriptional activity of AP-1. Interacts with RYBP; may prevent the ubiquitin-mediated proteasomal degradation of FANK1. Post-translationally, polyubiquitinated. Polyubiquitination leads to proteasomal degradation. Mostly restricted to testis.

It is found in the nucleus. Its subcellular location is the cytoplasm. The protein resides in the cytosol. It localises to the cytoskeleton. The protein localises to the cilium basal body. It is found in the cell projection. Its subcellular location is the cilium. In terms of biological role, through the activation of JUN and AP-1-mediated transcription, may regulate apoptosis. This chain is Fibronectin type 3 and ankyrin repeat domains protein 1, found in Homo sapiens (Human).